Here is a 200-residue protein sequence, read N- to C-terminus: Holliday junction branch migration complex subunit RuvA (200 aa).

Residues 1 to 63 are domain I; it reads MYAYIKGTLS…EDAQLLYGFI (63 aa). A domain II region spans residues 64–142; it reads NEEEKEMFLS…ITEENSDDLL (79 aa). The flexible linker stretch occupies residues 143–149; that stretch reads QTQVNGN. The interval 150 to 200 is domain III; sequence EQNQIISEALLALQALGYSKRELTKVEKSLNKHNVNSVDEAVKIGLQTLVS.

The protein belongs to the RuvA family. Homotetramer. Forms an RuvA(8)-RuvB(12)-Holliday junction (HJ) complex. HJ DNA is sandwiched between 2 RuvA tetramers; dsDNA enters through RuvA and exits via RuvB. An RuvB hexamer assembles on each DNA strand where it exits the tetramer. Each RuvB hexamer is contacted by two RuvA subunits (via domain III) on 2 adjacent RuvB subunits; this complex drives branch migration. In the full resolvosome a probable DNA-RuvA(4)-RuvB(12)-RuvC(2) complex forms which resolves the HJ.

Its subcellular location is the cytoplasm. Its function is as follows. The RuvA-RuvB-RuvC complex processes Holliday junction (HJ) DNA during genetic recombination and DNA repair, while the RuvA-RuvB complex plays an important role in the rescue of blocked DNA replication forks via replication fork reversal (RFR). RuvA specifically binds to HJ cruciform DNA, conferring on it an open structure. The RuvB hexamer acts as an ATP-dependent pump, pulling dsDNA into and through the RuvAB complex. HJ branch migration allows RuvC to scan DNA until it finds its consensus sequence, where it cleaves and resolves the cruciform DNA. This is Holliday junction branch migration complex subunit RuvA from Staphylococcus epidermidis (strain ATCC 35984 / DSM 28319 / BCRC 17069 / CCUG 31568 / BM 3577 / RP62A).